We begin with the raw amino-acid sequence, 348 residues long: MSTEKKTVAIVGGSGYAGGEFLRLALGHPHLEVTQVTSERSAKLPVSMVHPNLRGATNLKFRKAAELEEADIIVLALPHNSAAKRITEFEAKGKVIVDLSADFRLKDPEVYERFYGEPHPAPEQLGQWVYGNPELHREDLRGATRIACAGCFATSVILALYPLLRLGALAPKDIIATGLVGSSAAGASASESSHHPERAGSLRVYKPVGHRHTAEAQQELPGKFPLHLTAISTPRVRGILTTIQAWVPDGWSDKDVWSAYREVYGQEPFIRIVKVAKGIHRYPDPMLLDGTNFCDIGFEMDVDTGRVVLMSAIDNLVKGTAGHAIQSLNVAQGWDERAGLGFLGLHPT.

14 to 17 lines the NADP(+) pocket; it reads SGYA. Cys-151 is a catalytic residue. An NADP(+)-binding site is contributed by Asn-315.

This sequence belongs to the NAGSA dehydrogenase family. Type 1 subfamily. LysY sub-subfamily.

Its subcellular location is the cytoplasm. It carries out the reaction [amino-group carrier protein]-C-terminal-N-(1-carboxy-5-oxopentan-1-yl)-L-glutamine + phosphate + NADP(+) = [amino-group carrier protein]-C-terminal-N-(1-carboxy-5-phosphooxy-5-oxopentan-1-yl)-L-glutamine + NADPH + H(+). It functions in the pathway amino-acid biosynthesis; L-lysine biosynthesis via AAA pathway; L-lysine from L-alpha-aminoadipate (Thermus route): step 3/5. Its function is as follows. Catalyzes the NADPH-dependent reduction of [LysW]-aminoadipate 6-phosphate to yield [LysW]-aminoadipate 6-semialdehyde. In Deinococcus radiodurans (strain ATCC 13939 / DSM 20539 / JCM 16871 / CCUG 27074 / LMG 4051 / NBRC 15346 / NCIMB 9279 / VKM B-1422 / R1), this protein is [LysW]-L-2-aminoadipate 6-phosphate reductase.